The following is a 1051-amino-acid chain: Inactive tyrosine-protein kinase 7 (1051 aa).

An N-terminal signal peptide occupies residues 1–22 (MAALRALLLLLAVGAQAAIRFA). Ig-like C2-type domains follow at residues 23 to 105 (KEPY…ANAS), 115 to 204 (SVVL…DNFT), 213 to 298 (PQAV…KATL), 308 to 388 (PFSP…LSIT), 393 to 472 (PKWV…GSIE), 487 to 566 (PPPQ…ATVQ), and 573 to 661 (VTFK…AFLY). The Extracellular segment spans residues 23-685 (KEPYSQDALH…SHTPYKMIQT (663 aa)). The cysteines at positions 40 and 88 are disulfide-linked. Asn103 is a glycosylation site (N-linked (GlcNAc...) asparagine). An intrachain disulfide couples Cys137 to Cys187. Asn202, Asn255, and Asn264 each carry an N-linked (GlcNAc...) asparagine glycan. 5 disulfides stabilise this stretch: Cys234-Cys282, Cys326-Cys372, Cys414-Cys462, Cys505-Cys551, and Cys594-Cys645. N-linked (GlcNAc...) asparagine glycans are attached at residues Asn444, Asn548, and Asn627. A helical membrane pass occupies residues 686–706 (IGLSVGAAVAYIIIVLGLMFY). The Cytoplasmic portion of the chain corresponds to 707-1051 (CKKRRKAKRL…LGDSPADSKA (345 aa)). Positions 777 to 1048 (LQTITTLGRG…AAALGDSPAD (272 aa)) constitute a Protein kinase; inactive domain.

It belongs to the protein kinase superfamily. Tyr protein kinase family. Insulin receptor subfamily. Expressed in bone marrow, spleen, bursa, thymus and brain. Weakly expressed in fibroblasts. Also expressed in embryonic liver.

It is found in the membrane. Inactive tyrosine kinase involved in Wnt signaling. pathway. This is Inactive tyrosine-protein kinase 7 (PTK7) from Gallus gallus (Chicken).